The sequence spans 172 residues: MSDQQNTQQDDQPFFNIQRVYLKDMSLEQPNSPGIFLESEAPSVEVQVNVGASQLQEGIFEVVVTGTVTTKVQDKVAFLVEAHQAGIFDIRNVPVEQLDPLLGIACPTILYPYLRGNIADVITRAGFQAIHLSEINFQALYEQRLQAAMEEAQGAEGGNSGIVMPDGSQARH.

The tract at residues 152–172 is disordered; the sequence is AQGAEGGNSGIVMPDGSQARH.

It belongs to the SecB family. Homotetramer, a dimer of dimers. One homotetramer interacts with 1 SecA dimer.

It localises to the cytoplasm. Functionally, one of the proteins required for the normal export of preproteins out of the cell cytoplasm. It is a molecular chaperone that binds to a subset of precursor proteins, maintaining them in a translocation-competent state. It also specifically binds to its receptor SecA. The sequence is that of Protein-export protein SecB from Cupriavidus necator (strain ATCC 17699 / DSM 428 / KCTC 22496 / NCIMB 10442 / H16 / Stanier 337) (Ralstonia eutropha).